Reading from the N-terminus, the 434-residue chain is Serine hydroxymethyltransferase (434 aa).

Residues Leu-133 and 137–139 (GHL) contribute to the (6S)-5,6,7,8-tetrahydrofolate site. The residue at position 242 (Lys-242) is an N6-(pyridoxal phosphate)lysine.

The protein belongs to the SHMT family. Homodimer. It depends on pyridoxal 5'-phosphate as a cofactor.

It localises to the cytoplasm. The enzyme catalyses (6R)-5,10-methylene-5,6,7,8-tetrahydrofolate + glycine + H2O = (6S)-5,6,7,8-tetrahydrofolate + L-serine. The protein operates within one-carbon metabolism; tetrahydrofolate interconversion. It functions in the pathway amino-acid biosynthesis; glycine biosynthesis; glycine from L-serine: step 1/1. Catalyzes the reversible interconversion of serine and glycine with tetrahydrofolate (THF) serving as the one-carbon carrier. This reaction serves as the major source of one-carbon groups required for the biosynthesis of purines, thymidylate, methionine, and other important biomolecules. Also exhibits THF-independent aldolase activity toward beta-hydroxyamino acids, producing glycine and aldehydes, via a retro-aldol mechanism. The protein is Serine hydroxymethyltransferase of Bradyrhizobium sp. (strain BTAi1 / ATCC BAA-1182).